Consider the following 171-residue polypeptide: Ribosome maturation factor RimP (171 aa).

The protein belongs to the RimP family.

The protein localises to the cytoplasm. Required for maturation of 30S ribosomal subunits. The sequence is that of Ribosome maturation factor RimP from Oleidesulfovibrio alaskensis (strain ATCC BAA-1058 / DSM 17464 / G20) (Desulfovibrio alaskensis).